Reading from the N-terminus, the 450-residue chain is Probable glycine dehydrogenase (decarboxylating) subunit 1 (450 aa).

Belongs to the GcvP family. N-terminal subunit subfamily. In terms of assembly, the glycine cleavage system is composed of four proteins: P, T, L and H. In this organism, the P 'protein' is a heterodimer of two subunits.

It catalyses the reaction N(6)-[(R)-lipoyl]-L-lysyl-[glycine-cleavage complex H protein] + glycine + H(+) = N(6)-[(R)-S(8)-aminomethyldihydrolipoyl]-L-lysyl-[glycine-cleavage complex H protein] + CO2. Functionally, the glycine cleavage system catalyzes the degradation of glycine. The P protein binds the alpha-amino group of glycine through its pyridoxal phosphate cofactor; CO(2) is released and the remaining methylamine moiety is then transferred to the lipoamide cofactor of the H protein. The sequence is that of Probable glycine dehydrogenase (decarboxylating) subunit 1 from Brevibacillus brevis (strain 47 / JCM 6285 / NBRC 100599).